The chain runs to 342 residues: Farnesyl pyrophosphate synthase 2 (342 aa).

Lys-47, Arg-50, and Gln-86 together coordinate isopentenyl diphosphate. Mg(2+) contacts are provided by Asp-93 and Asp-97. Arg-102 contacts dimethylallyl diphosphate. An isopentenyl diphosphate-binding site is contributed by Arg-103. 5 residues coordinate dimethylallyl diphosphate: Lys-190, Thr-191, Gln-229, Lys-246, and Lys-255.

The protein belongs to the FPP/GGPP synthase family. Mg(2+) is required as a cofactor.

It is found in the cytoplasm. It carries out the reaction isopentenyl diphosphate + dimethylallyl diphosphate = (2E)-geranyl diphosphate + diphosphate. The enzyme catalyses isopentenyl diphosphate + (2E)-geranyl diphosphate = (2E,6E)-farnesyl diphosphate + diphosphate. It functions in the pathway isoprenoid biosynthesis; farnesyl diphosphate biosynthesis; farnesyl diphosphate from geranyl diphosphate and isopentenyl diphosphate: step 1/1. It participates in isoprenoid biosynthesis; geranyl diphosphate biosynthesis; geranyl diphosphate from dimethylallyl diphosphate and isopentenyl diphosphate: step 1/1. In terms of biological role, catalyzes the sequential condensation of isopentenyl pyrophosphate with the allylic pyrophosphates, dimethylallyl pyrophosphate, and then with the resultant geranylpyrophosphate to the ultimate product farnesyl pyrophosphate. The protein is Farnesyl pyrophosphate synthase 2 (FPS2) of Lupinus albus (White lupine).